Reading from the N-terminus, the 137-residue chain is Small ribosomal subunit protein uS19 (137 aa).

Positions 115–137 are disordered; sequence RNRVSHGSAGVGATRSSKFVPLK.

Belongs to the universal ribosomal protein uS19 family.

Its function is as follows. Protein S19 forms a complex with S13 that binds strongly to the 16S ribosomal RNA. In Methanococcoides burtonii (strain DSM 6242 / NBRC 107633 / OCM 468 / ACE-M), this protein is Small ribosomal subunit protein uS19.